Here is a 64-residue protein sequence, read N- to C-terminus: Small ribosomal subunit protein eS17 (64 aa).

Belongs to the eukaryotic ribosomal protein eS17 family.

The chain is Small ribosomal subunit protein eS17 from Methanosarcina barkeri (strain Fusaro / DSM 804).